We begin with the raw amino-acid sequence, 868 residues long: Protein translocase subunit SecA (868 aa).

Residues glutamine 85, glycine 103–threonine 107, and aspartate 508 contribute to the ATP site.

Belongs to the SecA family. As to quaternary structure, monomer and homodimer. Part of the essential Sec protein translocation apparatus which comprises SecA, SecYEG and auxiliary proteins SecDF. Other proteins may also be involved.

Its subcellular location is the cell membrane. The protein resides in the cytoplasm. The catalysed reaction is ATP + H2O + cellular proteinSide 1 = ADP + phosphate + cellular proteinSide 2.. In terms of biological role, part of the Sec protein translocase complex. Interacts with the SecYEG preprotein conducting channel. Has a central role in coupling the hydrolysis of ATP to the transfer of proteins into and across the cell membrane, serving as an ATP-driven molecular motor driving the stepwise translocation of polypeptide chains across the membrane. This chain is Protein translocase subunit SecA, found in Deinococcus radiodurans (strain ATCC 13939 / DSM 20539 / JCM 16871 / CCUG 27074 / LMG 4051 / NBRC 15346 / NCIMB 9279 / VKM B-1422 / R1).